Reading from the N-terminus, the 98-residue chain is Large ribosomal subunit protein uL23 (98 aa).

This sequence belongs to the universal ribosomal protein uL23 family. As to quaternary structure, part of the 50S ribosomal subunit. Contacts protein L29, and trigger factor when it is bound to the ribosome.

Its function is as follows. One of the early assembly proteins it binds 23S rRNA. One of the proteins that surrounds the polypeptide exit tunnel on the outside of the ribosome. Forms the main docking site for trigger factor binding to the ribosome. This Lactobacillus gasseri (strain ATCC 33323 / DSM 20243 / BCRC 14619 / CIP 102991 / JCM 1131 / KCTC 3163 / NCIMB 11718 / NCTC 13722 / AM63) protein is Large ribosomal subunit protein uL23.